The primary structure comprises 543 residues: Membrane protein insertase YidC (543 aa).

The chain crosses the membrane as a helical span at residues 7–27 (FLLIGLAMVSFLLWQQWQVDY). The tract at residues 30–61 (QPAQPVESQQTTGSDAPNSNGDVPIATPTNKS) is disordered. Positions 35-61 (VESQQTTGSDAPNSNGDVPIATPTNKS) are enriched in polar residues. 4 helical membrane-spanning segments follow: residues 341-361 (FAFLQFIHSLIGNWGFSIILI), 421-441 (GGCFPLLLQMPIFLALYWVLL), 451-471 (FIFWITDLSVKDPYFVLPILT), and 499-519 (PVAMSLFFFIFPAGLVLYWLI).

It belongs to the OXA1/ALB3/YidC family. Type 1 subfamily. As to quaternary structure, interacts with the Sec translocase complex via SecD. Specifically interacts with transmembrane segments of nascent integral membrane proteins during membrane integration.

It localises to the cell inner membrane. Its function is as follows. Required for the insertion and/or proper folding and/or complex formation of integral membrane proteins into the membrane. Involved in integration of membrane proteins that insert both dependently and independently of the Sec translocase complex, as well as at least some lipoproteins. Aids folding of multispanning membrane proteins. The chain is Membrane protein insertase YidC from Pseudoalteromonas atlantica (strain T6c / ATCC BAA-1087).